A 463-amino-acid polypeptide reads, in one-letter code: T-box transcription factor TBX1-A (463 aa).

2 disordered regions span residues 39 to 58 (SPSP…PCSA) and 75 to 104 (GASS…VKKN). A compositionally biased stretch (low complexity) spans 75-96 (GASSSSCASSTPGSGSTGSSSS). The T-box DNA-binding region spans 119–297 (LWDEFNQLGT…SNPFAKGFRD (179 aa)). Disordered stretches follow at residues 320–354 (RSRN…PLHG) and 377–409 (VPLS…PYKY). Residues 323–332 (NPVSSPTQNG) are compositionally biased toward polar residues. A compositionally biased stretch (basic and acidic residues) spans 333–347 (SDKDGDGRREYERDA). A Nuclear localization signal motif is present at residues 420–431 (KTRPAPYPLPTI).

Binds DNA as a dimer. Interacts with dscr6/ripply3.

It localises to the nucleus. Its function is as follows. Probable transcriptional regulator involved in developmental processes. Binds to the palindromic T site 5'-TTCACACCTAGGTGTGAA-3' DNA sequence. Induces pre-placodal ectoderm (PPE) gene expression in regions where RIPPLY3 is absent. Plays a role in the formation of the anteroposterior (AP) axis during embryonic development; required to establish the posterolateral border of the pre-placodal ectoderm (PPE) acting downstream of the retinoic acid receptor (RAR) signaling. This is T-box transcription factor TBX1-A (tbx1-a) from Xenopus laevis (African clawed frog).